The following is a 248-amino-acid chain: Proteasome subunit alpha type-3 (248 aa).

The protein belongs to the peptidase T1A family. In terms of assembly, the 26S proteasome consists of a 20S proteasome core and two 19S regulatory subunits. The 20S proteasome core is composed of 28 subunits that are arranged in four stacked rings, resulting in a barrel-shaped structure. The two end rings are each formed by seven alpha subunits, and the two central rings are each formed by seven beta subunits. The catalytic chamber with the active sites is on the inside of the barrel.

The protein resides in the cytoplasm. It localises to the nucleus. Functionally, the proteasome is a multicatalytic proteinase complex which is characterized by its ability to cleave peptides with Arg, Phe, Tyr, Leu, and Glu adjacent to the leaving group at neutral or slightly basic pH. The proteasome has an ATP-dependent proteolytic activity. The polypeptide is Proteasome subunit alpha type-3 (psmA3) (Dictyostelium discoideum (Social amoeba)).